Consider the following 340-residue polypeptide: Ketol-acid reductoisomerase (NADP(+)) (340 aa).

A KARI N-terminal Rossmann domain is found at 1-182 (MRVYYDRDCD…GGGRSGIIET (182 aa)). NADP(+) contacts are provided by residues 24–27 (YGSQ), Arg48, Ser51, Ser53, and 83–86 (DELQ). His108 is an active-site residue. Gly134 is an NADP(+) binding site. A KARI C-terminal knotted domain is found at 183–329 (NFRQECETDL…EKLRGMMPWI (147 aa)). Positions 191, 195, 227, and 231 each coordinate Mg(2+). Ser252 is a substrate binding site.

The protein belongs to the ketol-acid reductoisomerase family. Mg(2+) is required as a cofactor.

It catalyses the reaction (2R)-2,3-dihydroxy-3-methylbutanoate + NADP(+) = (2S)-2-acetolactate + NADPH + H(+). It carries out the reaction (2R,3R)-2,3-dihydroxy-3-methylpentanoate + NADP(+) = (S)-2-ethyl-2-hydroxy-3-oxobutanoate + NADPH + H(+). It functions in the pathway amino-acid biosynthesis; L-isoleucine biosynthesis; L-isoleucine from 2-oxobutanoate: step 2/4. Its pathway is amino-acid biosynthesis; L-valine biosynthesis; L-valine from pyruvate: step 2/4. Functionally, involved in the biosynthesis of branched-chain amino acids (BCAA). Catalyzes an alkyl-migration followed by a ketol-acid reduction of (S)-2-acetolactate (S2AL) to yield (R)-2,3-dihydroxy-isovalerate. In the isomerase reaction, S2AL is rearranged via a Mg-dependent methyl migration to produce 3-hydroxy-3-methyl-2-ketobutyrate (HMKB). In the reductase reaction, this 2-ketoacid undergoes a metal-dependent reduction by NADPH to yield (R)-2,3-dihydroxy-isovalerate. The polypeptide is Ketol-acid reductoisomerase (NADP(+)) (Cereibacter sphaeroides (strain ATCC 17029 / ATH 2.4.9) (Rhodobacter sphaeroides)).